Reading from the N-terminus, the 554-residue chain is Nonribosomal peptide synthetase ALT12 (554 aa).

In terms of domain architecture, Carrier spans 1 to 76 (MASLEHMKRI…TLWEAMNDTQ (76 aa)). S35 is modified (O-(pantetheine 4'-phosphoryl)serine). Positions 124–434 (VQDNVLCVAP…QRIQNEITST (311 aa)) are condensation.

This sequence belongs to the NRP synthetase family.

The protein operates within mycotoxin biosynthesis. Its function is as follows. Nonribosomal peptide synthetase; part of the gene cluster that mediates the biosynthesis of the host-selective toxins (HSTs) AAL-toxins, sphinganine-analog mycotoxins responsible for Alternaria stem canker on tomato by the tomato pathotype. The biosynthesis starts with the polyketide synthase ALT1-catalyzed C-16 carbon chain assembly from one starter acetyl-CoA unit with malonyl-CoA extender units. ALT1 also selectively transfers methyl groups at the first and the third cycle of chain elongation for AAL toxin. The C-16 polyketide chain is released from the enzyme by a nucleophilic attack of a carbanion, which is derived from R-carbon of glycin by decarboxylation, on the carbonyl carbon of polyketide acyl chain. This step is probably catalyzed by a pyridoxal 5'-phosphate-dependent aminoacyl transferase ALT4. The respective functions of the other enzymes encoded by the cluster have still to be elucidated. The sphingosine N-acyltransferase-like protein ALT7 seems not to act as a resistance/self-tolerance factor against the toxin in the toxin biosynthetic gene cluster, contrary to what is expected. The protein is Nonribosomal peptide synthetase ALT12 of Alternaria alternata (Alternaria rot fungus).